We begin with the raw amino-acid sequence, 219 residues long: Ras-related protein Rab-3B (219 aa).

At alanine 2 the chain carries N-acetylalanine. The GTP site is built by serine 31, serine 32, valine 33, glycine 34, lysine 35, threonine 36, serine 37, proline 49, and serine 53. Residue serine 32 participates in GDP binding. Glycine 34, lysine 35, threonine 36, and serine 37 together coordinate GDP. Threonine 36 is a binding site for Mg(2+). Positions 45–58 (DTFTPAFVSTVGID) match the Switch 1 motif. Residues threonine 54 and aspartate 77 each contribute to the Mg(2+) site. Residues 78 to 96 (TAGQERYRTITTAYYRGAM) carry the Switch 2 motif. Position 80 (glycine 80) interacts with GTP. Position 86 is a phosphothreonine; by LRRK2 (threonine 86). 3 residues coordinate GTP: asparagine 135, lysine 136, and aspartate 138. Residues asparagine 135, lysine 136, aspartate 138, methionine 139, alanine 166, and lysine 167 each contribute to the GDP site. Residues alanine 166 and lysine 167 each contribute to the GTP site. Phosphoserine is present on residues serine 188 and serine 190. 2 S-geranylgeranyl cysteine lipidation sites follow: cysteine 217 and cysteine 219. Cysteine 219 carries the post-translational modification Cysteine methyl ester.

This sequence belongs to the small GTPase superfamily. Rab family. As to quaternary structure, interacts with RIMS1, RIMS2, RPH3A and RPH3AL. The GTP-bound form interacts with GAS8/DRC4 (via coiled-coil domains). The GTP-bound form interacts with REP15. Interacts with GDI2, CHM and CHML; phosphorylation at Thr-86 disrupts these interactions. Interacts with MADD (via uDENN domain); the GTP-bound form is preferred for interaction. Mg(2+) serves as cofactor. Post-translationally, phosphorylation of Thr-86 in the switch II region by LRRK2 prevents the association of RAB regulatory proteins, including CHM, CHML and RAB GDP dissociation inhibitor GDI2.

Its subcellular location is the cell membrane. The protein localises to the golgi apparatus. The catalysed reaction is GTP + H2O = GDP + phosphate + H(+). With respect to regulation, regulated by guanine nucleotide exchange factors (GEFs) which promote the exchange of bound GDP for free GTP. Regulated by GTPase activating proteins (GAPs) which increase the GTP hydrolysis activity. Inhibited by GDP dissociation inhibitors (GDIs) which prevent Rab-GDP dissociation. Its function is as follows. The small GTPases Rab are key regulators of intracellular membrane trafficking, from the formation of transport vesicles to their fusion with membranes. Rabs cycle between an inactive GDP-bound form and an active GTP-bound form that is able to recruit to membranes different sets of downstream effectors directly responsible for vesicle formation, movement, tethering and fusion. The chain is Ras-related protein Rab-3B from Homo sapiens (Human).